Consider the following 675-residue polypeptide: Putative exonuclease GOR (675 aa).

Residues 66–79 (VAKEAAPEASRHLG) show a composition bias toward basic and acidic residues. 2 disordered regions span residues 66-90 (VAKE…APEG) and 225-263 (AKRT…TATT). The GOR1-125 epitope stretch occupies residues 358 to 483 (MPGLSRAALY…VRDGRKESLD (126 aa)).

It belongs to the REXO1/REXO3 family.

The protein resides in the cytoplasm. Its subcellular location is the nucleus. In Homo sapiens (Human), this protein is Putative exonuclease GOR (REXO1L1P).